Here is a 187-residue protein sequence, read N- to C-terminus: Ribosome hibernation promotion factor (187 aa).

Belongs to the HPF/YfiA ribosome-associated protein family. Long HPF subfamily. As to quaternary structure, interacts with 100S ribosomes.

The protein resides in the cytoplasm. Functionally, involved in 100S ribosome formation from 70S ribosomes; 100S ribosomes are probably translationally inactive. Ribosome hibernation may be used by the cell to decrease overall energy consumption under nutrient-limiting conditions. Unlike E.coli, 100S ribosomes are present from mid-exponential growth, peak during the transition from log to stationary phase and then decrease. The chain is Ribosome hibernation promotion factor from Listeria monocytogenes serotype 1/2a (strain 10403S).